Consider the following 1409-residue polypeptide: DNA-directed RNA polymerase subunit beta' (1409 aa).

4 residues coordinate Zn(2+): cysteine 72, cysteine 74, cysteine 87, and cysteine 90. Positions 462, 464, and 466 each coordinate Mg(2+). Residues cysteine 816, cysteine 890, cysteine 897, and cysteine 900 each contribute to the Zn(2+) site.

This sequence belongs to the RNA polymerase beta' chain family. As to quaternary structure, the RNAP catalytic core consists of 2 alpha, 1 beta, 1 beta' and 1 omega subunit. When a sigma factor is associated with the core the holoenzyme is formed, which can initiate transcription. It depends on Mg(2+) as a cofactor. Requires Zn(2+) as cofactor.

The enzyme catalyses RNA(n) + a ribonucleoside 5'-triphosphate = RNA(n+1) + diphosphate. Functionally, DNA-dependent RNA polymerase catalyzes the transcription of DNA into RNA using the four ribonucleoside triphosphates as substrates. This is DNA-directed RNA polymerase subunit beta' from Aromatoleum aromaticum (strain DSM 19018 / LMG 30748 / EbN1) (Azoarcus sp. (strain EbN1)).